The chain runs to 290 residues: Multiple sugar-binding transport system permease protein MsmF (290 aa).

7 consecutive transmembrane segments (helical) span residues 12–32 (GWTFLIVPLILQVVFFYFPMF), 72–92 (FTLVLTLALIVGEIVLGIIIA), 104–124 (FFRAWFFFPAVLSGLTVSLIF), 156–176 (VIASIFVLLWQGVAMPIILFL), 201–221 (FWSVELPYLLPSISMVFIMAL), 231–253 (IFALTGGGPNNSTTSLGLLVYNY), and 260–280 (YGYANAIALILFIIIGIVSVL). The ABC transmembrane type-1 domain maps to 70–281 (IGFTLVLTLA…IIIGIVSVLQ (212 aa)).

Belongs to the binding-protein-dependent transport system permease family. MalFG subfamily.

Its subcellular location is the cell membrane. Its function is as follows. Involved in a binding protein-dependent transport system responsible for the uptake of melibiose, raffinose and isomaltotriose. The protein is Multiple sugar-binding transport system permease protein MsmF (msmF) of Streptococcus mutans serotype c (strain ATCC 700610 / UA159).